Reading from the N-terminus, the 222-residue chain is MLPHGLIVSCQALPDEPLHSSFIMSKMALAAYEGGAVGIRANTKEDILAIKETVDLPVIGIVKRDYNHSDVFITATSKEVDELIESQCEVIALDATLQQRPKETLDELVSYIRTHAPNVEIMADIATVEEAKNAARLGFDYIGTTLHGYTSYTQGQLLYQNDFQFLKDVLQSVDAKVIAEGNVITPDMYKRVMDLGVHCSVVGGAITRPKEITKRFVQVMED.

The protein belongs to the NanE family.

The enzyme catalyses an N-acyl-D-glucosamine 6-phosphate = an N-acyl-D-mannosamine 6-phosphate. It functions in the pathway amino-sugar metabolism; N-acetylneuraminate degradation; D-fructose 6-phosphate from N-acetylneuraminate: step 3/5. Functionally, converts N-acetylmannosamine-6-phosphate (ManNAc-6-P) to N-acetylglucosamine-6-phosphate (GlcNAc-6-P). This chain is Putative N-acetylmannosamine-6-phosphate 2-epimerase, found in Staphylococcus aureus (strain MSSA476).